The primary structure comprises 162 residues: Deoxyuridine 5'-triphosphate nucleotidohydrolase (162 aa).

Serine 11 carries the post-translational modification Phosphoserine. DUTP-binding positions include 83–85, 97–103, glycine 108, arginine 151, and 156–157; these read RSG, GVIDEDY, and FG.

It belongs to the dUTPase family. As to quaternary structure, homotrimer. Mg(2+) is required as a cofactor. Phosphorylated in vivo on Ser-11, a reaction that can be catalyzed in vitro by CDC2.

Its subcellular location is the nucleus. It carries out the reaction dUTP + H2O = dUMP + diphosphate + H(+). Its pathway is pyrimidine metabolism; dUMP biosynthesis; dUMP from dCTP (dUTP route): step 2/2. Its function is as follows. Catalyzes the cleavage of 2'-deoxyuridine 5'-triphosphate (dUTP) into 2'-deoxyuridine 5'-monophosphate (dUMP) and inorganic pyrophosphate and through its action efficiently prevents uracil misincorporation into DNA and at the same time provides dUMP, the substrate for de novo thymidylate biosynthesis. Inhibits peroxisome proliferator-activated receptor (PPAR) activity by binding of its N-terminal to PPAR, preventing the latter's dimerization with retinoid X receptor. Essential for embryonic development. This chain is Deoxyuridine 5'-triphosphate nucleotidohydrolase (Dut), found in Mus musculus (Mouse).